A 293-amino-acid polypeptide reads, in one-letter code: Elongation factor Ts (293 aa).

Residues 80-83 form an involved in Mg(2+) ion dislocation from EF-Tu region; it reads TDFV.

This sequence belongs to the EF-Ts family.

It localises to the cytoplasm. Associates with the EF-Tu.GDP complex and induces the exchange of GDP to GTP. It remains bound to the aminoacyl-tRNA.EF-Tu.GTP complex up to the GTP hydrolysis stage on the ribosome. In Paraburkholderia phymatum (strain DSM 17167 / CIP 108236 / LMG 21445 / STM815) (Burkholderia phymatum), this protein is Elongation factor Ts.